A 117-amino-acid polypeptide reads, in one-letter code: Hainantoxin-XV (117 aa).

An N-terminal signal peptide occupies residues 1–20 (MKLCAVIIASLLVCVAVASS). Residues 20 to 55 (SSDNQKEFAQEKEMTREETQSLGEHEKDDEVTGSEE) are disordered. A propeptide spanning residues 21–56 (SDNQKEFAQEKEMTREETQSLGEHEKDDEVTGSEER) is cleaved from the precursor. Positions 23–55 (NQKEFAQEKEMTREETQSLGEHEKDDEVTGSEE) are enriched in basic and acidic residues. 4 disulfide bridges follow: Cys58/Cys72, Cys65/Cys78, Cys69/Cys115, and Cys71/Cys91.

Belongs to the neurotoxin 03 (Tx2) family. 02 subfamily. HNTX-XV sub-subfamily. As to expression, expressed by the venom gland.

It localises to the secreted. Its function is as follows. Putative ion channel inhibitor. The chain is Hainantoxin-XV from Cyriopagopus hainanus (Chinese bird spider).